We begin with the raw amino-acid sequence, 182 residues long: Large ribosomal subunit protein uL5 (182 aa).

The protein belongs to the universal ribosomal protein uL5 family. As to quaternary structure, part of the 50S ribosomal subunit; part of the 5S rRNA/L5/L18/L25 subcomplex. Contacts the 5S rRNA and the P site tRNA. Forms a bridge to the 30S subunit in the 70S ribosome.

Its function is as follows. This is one of the proteins that bind and probably mediate the attachment of the 5S RNA into the large ribosomal subunit, where it forms part of the central protuberance. In the 70S ribosome it contacts protein S13 of the 30S subunit (bridge B1b), connecting the 2 subunits; this bridge is implicated in subunit movement. Contacts the P site tRNA; the 5S rRNA and some of its associated proteins might help stabilize positioning of ribosome-bound tRNAs. This chain is Large ribosomal subunit protein uL5, found in Leptospira interrogans serogroup Icterohaemorrhagiae serovar copenhageni (strain Fiocruz L1-130).